Here is a 745-residue protein sequence, read N- to C-terminus: 1,4-alpha-glucan branching enzyme GlgB (745 aa).

The active-site Nucleophile is the aspartate 416. The Proton donor role is filled by glutamate 469.

It belongs to the glycosyl hydrolase 13 family. GlgB subfamily. As to quaternary structure, monomer.

The enzyme catalyses Transfers a segment of a (1-&gt;4)-alpha-D-glucan chain to a primary hydroxy group in a similar glucan chain.. Its pathway is glycan biosynthesis; glycogen biosynthesis. Its function is as follows. Catalyzes the formation of the alpha-1,6-glucosidic linkages in glycogen by scission of a 1,4-alpha-linked oligosaccharide from growing alpha-1,4-glucan chains and the subsequent attachment of the oligosaccharide to the alpha-1,6 position. The polypeptide is 1,4-alpha-glucan branching enzyme GlgB (Shewanella sp. (strain W3-18-1)).